Here is a 224-residue protein sequence, read N- to C-terminus: uncharacterized protein (224 aa).

Residues 1 to 23 form the signal peptide; that stretch reads MKKLLAAGIIGLLTVSIASPSFA. In terms of domain architecture, VWFA spans 31–224; sequence NVAVLFDGSG…WEKEAQKFTE (194 aa).

It to B.subtilis YwmC.

This is an uncharacterized protein from Bacillus subtilis (strain 168).